A 159-amino-acid chain; its full sequence is Phospholipase A2 AP-PLA2-I (159 aa).

An N-terminal signal peptide occupies residues M1–A19. Positions G20 to Q23 are excised as a propeptide. Cystine bridges form between C51–C159, C53–C69, C68–C139, C75–C132, C85–C125, and C110–C130. Residues Y52, G54, and G56 each coordinate Ca(2+). H72 is a catalytic residue. D73 serves as a coordination point for Ca(2+). Residue D133 is part of the active site.

The protein belongs to the phospholipase A2 family. Group I subfamily. In terms of assembly, homodimer. Ca(2+) is required as a cofactor. In terms of tissue distribution, expressed by the venom gland.

It localises to the secreted. It carries out the reaction a 1,2-diacyl-sn-glycero-3-phosphocholine + H2O = a 1-acyl-sn-glycero-3-phosphocholine + a fatty acid + H(+). Its function is as follows. Starfish phospholipase A2 (PLA2) that has hemorrhagic and capillary permeability-increasing activities and hence is considered to be deeply involved in the local inflammation. Shows hemolytic activity only in the presence of phosphatidylcholine (PC). PLA2 catalyzes the calcium-dependent hydrolysis of the 2-acyl groups in 3-sn-phosphoglycerides. This chain is Phospholipase A2 AP-PLA2-I, found in Acanthaster planci (Crown-of-thorns starfish).